A 299-amino-acid chain; its full sequence is MKKLGTDLLKRGFAKMVKHGVVMDVTNVEQALIAEEAGATAVMALERVPADIRVQGGVARMSDPEMILEIKDAVSIPVMAKARIGHYVEAQVLESIGVDMVDESEVLTPADEVNHIDKRAFTAPFVCGARNLGEALRRIDEGAAMIRTKGEAGTGNVVEAVKHMRAVNEGIARVIGYKEMGLEAELIQMARNELKVPMELISEVAELKRLPVVNFAAGGIATPADAALMMQMGCDGVFVGSGIFKSGNPAVRAKAIVEATYNFDKPEVIAEVSKNLGEAMVGINIDEIPEEMLLAKRGI.

Position 24 (D24) interacts with D-ribose 5-phosphate. K81 serves as the catalytic Schiff-base intermediate with D-ribose 5-phosphate. G153 lines the D-ribose 5-phosphate pocket. Residue R165 coordinates D-glyceraldehyde 3-phosphate. Residues G219 and G240–S241 contribute to the D-ribose 5-phosphate site.

The protein belongs to the PdxS/SNZ family. In the presence of PdxT, forms a dodecamer of heterodimers.

It catalyses the reaction aldehydo-D-ribose 5-phosphate + D-glyceraldehyde 3-phosphate + L-glutamine = pyridoxal 5'-phosphate + L-glutamate + phosphate + 3 H2O + H(+). Its pathway is cofactor biosynthesis; pyridoxal 5'-phosphate biosynthesis. In terms of biological role, catalyzes the formation of pyridoxal 5'-phosphate from ribose 5-phosphate (RBP), glyceraldehyde 3-phosphate (G3P) and ammonia. The ammonia is provided by the PdxT subunit. Can also use ribulose 5-phosphate and dihydroxyacetone phosphate as substrates, resulting from enzyme-catalyzed isomerization of RBP and G3P, respectively. This chain is Pyridoxal 5'-phosphate synthase subunit PdxS, found in Methanococcus maripaludis (strain DSM 14266 / JCM 13030 / NBRC 101832 / S2 / LL).